Here is an 867-residue protein sequence, read N- to C-terminus: uncharacterized protein (867 aa).

Positions 76-108 (CDFCRQKKIRCDMDQSPRPGNACINCRKHHLDC) form a DNA-binding region, zn(2)-C6 fungal-type. 2 disordered regions span residues 110–167 (FTRT…ITPV) and 217–257 (PQLA…NSNL). 2 stretches are compositionally biased toward polar residues: residues 137 to 167 (SAKS…ITPV) and 248 to 257 (SISSYTNSNL).

The protein resides in the nucleus. This is an uncharacterized protein from Schizosaccharomyces pombe (strain 972 / ATCC 24843) (Fission yeast).